Reading from the N-terminus, the 179-residue chain is uncharacterized protein (179 aa).

Residues 1-32 (MELQGAQEDLGISLSSPRRNHETRPGSKAKGR) are disordered.

This is an uncharacterized protein from Homo sapiens (Human).